The following is a 200-amino-acid chain: 3-isopropylmalate dehydratase small subunit (200 aa).

It belongs to the LeuD family. LeuD type 1 subfamily. Heterodimer of LeuC and LeuD.

The catalysed reaction is (2R,3S)-3-isopropylmalate = (2S)-2-isopropylmalate. It participates in amino-acid biosynthesis; L-leucine biosynthesis; L-leucine from 3-methyl-2-oxobutanoate: step 2/4. In terms of biological role, catalyzes the isomerization between 2-isopropylmalate and 3-isopropylmalate, via the formation of 2-isopropylmaleate. The chain is 3-isopropylmalate dehydratase small subunit from Vibrio atlanticus (strain LGP32) (Vibrio splendidus (strain Mel32)).